Reading from the N-terminus, the 703-residue chain is Lactococcin-G-processing and transport ATP-binding protein LagD (703 aa).

In terms of domain architecture, Peptidase C39 spans 7-132; it reads QQDEKDCGVA…KEWTGVLLFP (126 aa). Residue C13 is part of the active site. Residues 153–435 form the ABC transmembrane type-1 domain; the sequence is PILIKQKSLF…IINLQVKMQK (283 aa). 7 helical membrane-spanning segments follow: residues 162–182, 189–209, 224–244, 267–287, 291–311, 381–401, and 409–429; these read FITI…DNII, TLNI…LFEY, MSIM…FFAT, ATLS…TLAI, QLFL…YVFI, MVIE…YVID, and LITY…IINL. The 235-residue stretch at 469 to 703 folds into the ABC transporter domain; sequence IKLDKVSFSY…EGVYRRLLNA (235 aa). 502–509 contacts ATP; the sequence is GVSGSGKS.

Belongs to the ABC transporter superfamily. LagD family. In terms of assembly, homodimer.

It is found in the cell membrane. LagD (TC 3.A.1) is involved in processing the signal peptide and probably also in export of the bacteriocin lactococcin G. This is Lactococcin-G-processing and transport ATP-binding protein LagD (lagD) from Lactococcus lactis subsp. lactis (Streptococcus lactis).